The chain runs to 133 residues: ATP synthase epsilon chain, chloroplastic (133 aa).

It belongs to the ATPase epsilon chain family. In terms of assembly, F-type ATPases have 2 components, CF(1) - the catalytic core - and CF(0) - the membrane proton channel. CF(1) has five subunits: alpha(3), beta(3), gamma(1), delta(1), epsilon(1). CF(0) has three main subunits: a, b and c.

The protein localises to the plastid. It is found in the chloroplast thylakoid membrane. In terms of biological role, produces ATP from ADP in the presence of a proton gradient across the membrane. This Daucus carota (Wild carrot) protein is ATP synthase epsilon chain, chloroplastic.